We begin with the raw amino-acid sequence, 249 residues long: MEMKQISETTLKIMITMEDLEEHGMELKDFLIPQEKTEEFFYTVMDELDLPDNFKNSGMLSFRVTPRKDRVDVFVTKSDLKEDLDFNDLSDMEDYSGLSPEEFLKALEDNFMDKGDIEAHHKLEEHDKTLKEVDETMTEPAKEVAEETIREDYTHYVLAFSDFDQVVTFAQGLKNVSVEGSEFYKLGDVYYMTILLYLADEPDYYANNMYARFLEYANVADRTRPYLQEHATILMEEDALPVLQATKWS.

It belongs to the MecA family. As to quaternary structure, homodimer.

Functionally, enables the recognition and targeting of unfolded and aggregated proteins to the ClpC protease or to other proteins involved in proteolysis. The sequence is that of Adapter protein MecA from Streptococcus thermophilus (strain ATCC BAA-491 / LMD-9).